A 96-amino-acid polypeptide reads, in one-letter code: UPF0235 protein YggU (96 aa).

This sequence belongs to the UPF0235 family.

This chain is UPF0235 protein YggU, found in Shigella flexneri.